The primary structure comprises 599 residues: Phosphomethylpyrimidine synthase (599 aa).

A compositionally biased stretch (polar residues) spans 1–16 (MSAASANSVTNPSAWE). Disordered stretches follow at residues 1–53 (MSAA…PNDP) and 82–108 (EDTEEYAGRERNLADDGRSAQRRGAAS). Over residues 87–100 (YAGRERNLADDGRS) the composition is skewed to basic and acidic residues. Substrate contacts are provided by residues asparagine 192, methionine 221, tyrosine 250, histidine 286, 306–308 (SRG), 347–350 (DGLR), and glutamate 386. Position 390 (histidine 390) interacts with Zn(2+). Tyrosine 413 serves as a coordination point for substrate. Residue histidine 454 coordinates Zn(2+). Residues cysteine 534, cysteine 537, and cysteine 542 each contribute to the [4Fe-4S] cluster site.

The protein belongs to the ThiC family. Requires [4Fe-4S] cluster as cofactor.

It carries out the reaction 5-amino-1-(5-phospho-beta-D-ribosyl)imidazole + S-adenosyl-L-methionine = 4-amino-2-methyl-5-(phosphooxymethyl)pyrimidine + CO + 5'-deoxyadenosine + formate + L-methionine + 3 H(+). It functions in the pathway cofactor biosynthesis; thiamine diphosphate biosynthesis. In terms of biological role, catalyzes the synthesis of the hydroxymethylpyrimidine phosphate (HMP-P) moiety of thiamine from aminoimidazole ribotide (AIR) in a radical S-adenosyl-L-methionine (SAM)-dependent reaction. The chain is Phosphomethylpyrimidine synthase from Corynebacterium diphtheriae (strain ATCC 700971 / NCTC 13129 / Biotype gravis).